Reading from the N-terminus, the 558-residue chain is NAD(P)H-quinone oxidoreductase chain 4 (558 aa).

Transmembrane regions (helical) follow at residues 25 to 45 (FPWL…VPFV), 56 to 76 (WFAL…YLTG), 90 to 110 (VSWL…LSMP), 111 to 131 (LILL…PVTF), 133 to 153 (PKLF…VFAV), 157 to 177 (LLFF…LAIW), 189 to 209 (FILY…AMGF), 230 to 250 (GFEL…LPIV), 264 to 284 (TAPV…YALM), 298 to 318 (FAPL…LTSF), 327 to 347 (IAYS…SFSE), 353 to 373 (AMLQ…LVGA), 397 to 417 (FALW…SGFV), 438 to 458 (IVID…LLSM), and 485 to 505 (VYII…PKLM).

This sequence belongs to the complex I subunit 4 family.

The protein localises to the cellular thylakoid membrane. It catalyses the reaction a plastoquinone + NADH + (n+1) H(+)(in) = a plastoquinol + NAD(+) + n H(+)(out). The enzyme catalyses a plastoquinone + NADPH + (n+1) H(+)(in) = a plastoquinol + NADP(+) + n H(+)(out). Functionally, NDH-1 shuttles electrons from NAD(P)H, via FMN and iron-sulfur (Fe-S) centers, to quinones in the respiratory chain. The immediate electron acceptor for the enzyme in this species is believed to be plastoquinone. Couples the redox reaction to proton translocation (for every two electrons transferred, four hydrogen ions are translocated across the cytoplasmic membrane), and thus conserves the redox energy in a proton gradient. This chain is NAD(P)H-quinone oxidoreductase chain 4, found in Synechococcus sp. (strain CC9311).